The following is a 151-amino-acid chain: Large ribosomal subunit protein bL9 (151 aa).

The protein belongs to the bacterial ribosomal protein bL9 family.

Functionally, binds to the 23S rRNA. This Mycolicibacterium gilvum (strain PYR-GCK) (Mycobacterium gilvum (strain PYR-GCK)) protein is Large ribosomal subunit protein bL9.